Consider the following 393-residue polypeptide: Ig gamma-1 chain C region, membrane-bound form (393 aa).

Positions 1–97 are CH1; that stretch reads AKTTPPSVYP…ASSTKVDKKI (97 aa). A disulfide bridge connects residues C27 and C82. Residues 98–110 form a hinge region; that stretch reads VPRDCGCKPCICT. The tract at residues 111 to 217 is CH2; that stretch reads VPEVSSVFIF…PIEKTISKTK (107 aa). Intrachain disulfides connect C138–C198 and C244–C302. N174 is a glycosylation site (N-linked (GlcNAc...) asparagine). Residues 218–324 are CH3; the sequence is GRPKAPQVYT…EKSLSHSPGL (107 aa). The chain crosses the membrane as a helical span at residues 340 to 357; it reads GLWTTITIFISLFLLSVC. Topologically, residues 358–393 are cytoplasmic; that stretch reads YSAAVTLFKVKWIFSSVVELKQTLVPEYKNMIGQAP.

It is found in the cell membrane. The sequence is that of Ig gamma-1 chain C region, membrane-bound form (Ighg1) from Mus musculus (Mouse).